The following is a 232-amino-acid chain: Izumo sperm-egg fusion protein 4 (232 aa).

The N-terminal stretch at 1–15 (MALLLCLVCLTAALA) is a signal peptide. 2 N-linked (GlcNAc...) asparagine glycosylation sites follow: Asn24 and Asn219.

The protein belongs to the Izumo family. Detected in sperm.

The protein localises to the secreted. The polypeptide is Izumo sperm-egg fusion protein 4 (IZUMO4) (Homo sapiens (Human)).